We begin with the raw amino-acid sequence, 327 residues long: Ribose-phosphate pyrophosphokinase (327 aa).

ATP is bound by residues 46 to 48 (NGE) and 105 to 106 (RQ). The Mg(2+) site is built by His139 and Asp179. Residue Lys203 is part of the active site. D-ribose 5-phosphate is bound by residues Arg205, Asp231, and 235-239 (DTGGT).

Belongs to the ribose-phosphate pyrophosphokinase family. Class I subfamily. In terms of assembly, homohexamer. Mg(2+) serves as cofactor.

It localises to the cytoplasm. It catalyses the reaction D-ribose 5-phosphate + ATP = 5-phospho-alpha-D-ribose 1-diphosphate + AMP + H(+). Its pathway is metabolic intermediate biosynthesis; 5-phospho-alpha-D-ribose 1-diphosphate biosynthesis; 5-phospho-alpha-D-ribose 1-diphosphate from D-ribose 5-phosphate (route I): step 1/1. Involved in the biosynthesis of the central metabolite phospho-alpha-D-ribosyl-1-pyrophosphate (PRPP) via the transfer of pyrophosphoryl group from ATP to 1-hydroxyl of ribose-5-phosphate (Rib-5-P). The sequence is that of Ribose-phosphate pyrophosphokinase from Mycobacterium leprae (strain TN).